The following is a 619-amino-acid chain: TOX high mobility group box family member 4 (619 aa).

2 disordered regions span residues 155 to 227 (LSLG…QKPV) and 306 to 335 (DPVPQSQTPSPPPVTAADPASPAPASTESP). Threonine 176 bears the Phosphothreonine mark. Phosphoserine is present on residues serine 178 and serine 182. Positions 183 to 193 (LHEDGVDDFRR) are enriched in basic and acidic residues. Basic residues predominate over residues 208 to 218 (KQKAPKKRKKK). Residues 213–218 (KKRKKK) carry the Nuclear localization signal motif. Positions 223 to 291 (PQKPVSAYAL…EYLKALAAYK (69 aa)) form a DNA-binding region, HMG box. Threonine 313 is subject to Phosphothreonine. Phosphoserine is present on serine 315. Positions 320–335 (TAADPASPAPASTESP) are enriched in low complexity. At arginine 479 the chain carries Asymmetric dimethylarginine. Serine 531, serine 548, serine 550, serine 558, serine 560, and serine 565 each carry phosphoserine.

As to quaternary structure, component of the PNUTS-PP1 phosphatase complex, composed of PPP1R10/PNUTS, TOX4, WDR82 and PPP1CA or PPP1CB or PPP1CC. Interacts with PPP1R10/PNUTS. Interacts with FOXO1 and CREB1 (increased by cAMP); FOXO1 and CREB1 are required for full induction of TOX4-dependent activity and the interactions are inhibited by insulin.

The protein resides in the nucleus. Its subcellular location is the chromosome. Its activity is regulated as follows. In liver, recruited to target gene promoters following treatment with dexamethasone and cAMP. Binding is decreased in presence of insulin. Functionally, transcription factor that modulates cell fate reprogramming from the somatic state to the pluripotent and neuronal fate. In liver, controls the expression of hormone-regulated gluconeogenic genes such as G6PC1 and PCK1. This regulation is independent of the insulin receptor activation. Also acts as a regulatory component of protein phosphatase 1 (PP1) complexes. Component of the PNUTS-PP1 protein phosphatase complex, a PP1 complex that regulates RNA polymerase II transcription pause-release. PNUTS-PP1 also plays a role in the control of chromatin structure and cell cycle progression during the transition from mitosis into interphase. The chain is TOX high mobility group box family member 4 from Mus musculus (Mouse).